The sequence spans 1203 residues: DNA-directed RNA polymerase subunit beta' (1203 aa).

4 residues coordinate Zn(2+): Cys60, Cys62, Cys75, and Cys78. Mg(2+)-binding residues include Asp449, Asp451, and Asp453. Cys818, Cys892, Cys899, and Cys902 together coordinate Zn(2+).

The protein belongs to the RNA polymerase beta' chain family. In terms of assembly, the RNAP catalytic core consists of 2 alpha, 1 beta, 1 beta' and 1 omega subunit. When a sigma factor is associated with the core the holoenzyme is formed, which can initiate transcription. It depends on Mg(2+) as a cofactor. Requires Zn(2+) as cofactor.

The enzyme catalyses RNA(n) + a ribonucleoside 5'-triphosphate = RNA(n+1) + diphosphate. DNA-dependent RNA polymerase catalyzes the transcription of DNA into RNA using the four ribonucleoside triphosphates as substrates. The protein is DNA-directed RNA polymerase subunit beta' of Bacillus thuringiensis (strain Al Hakam).